The sequence spans 269 residues: Thiazole synthase (269 aa).

Catalysis depends on Lys-109, which acts as the Schiff-base intermediate with DXP. 1-deoxy-D-xylulose 5-phosphate is bound by residues Gly-170, 196–197, and 218–219; these read AG and NT.

The protein belongs to the ThiG family. As to quaternary structure, homotetramer. Forms heterodimers with either ThiH or ThiS.

The protein resides in the plastid. Its subcellular location is the chloroplast. The enzyme catalyses [ThiS sulfur-carrier protein]-C-terminal-Gly-aminoethanethioate + 2-iminoacetate + 1-deoxy-D-xylulose 5-phosphate = [ThiS sulfur-carrier protein]-C-terminal Gly-Gly + 2-[(2R,5Z)-2-carboxy-4-methylthiazol-5(2H)-ylidene]ethyl phosphate + 2 H2O + H(+). It participates in cofactor biosynthesis; thiamine diphosphate biosynthesis. Functionally, catalyzes the rearrangement of 1-deoxy-D-xylulose 5-phosphate (DXP) to produce the thiazole phosphate moiety of thiamine. Sulfur is provided by the thiocarboxylate moiety of the carrier protein ThiS. In vitro, sulfur can be provided by H(2)S. This chain is Thiazole synthase, found in Phaeodactylum tricornutum (strain CCAP 1055/1).